The chain runs to 165 residues: Protein SprT (165 aa).

Positions 20 to 163 constitute a SprT-like domain; sequence EKLAQANLKL…RCVHCGEQLV (144 aa). His-78 is a Zn(2+) binding site. Glu-79 is a catalytic residue. A Zn(2+)-binding site is contributed by His-82.

This sequence belongs to the SprT family. Zn(2+) is required as a cofactor.

It is found in the cytoplasm. This is Protein SprT from Shigella boydii serotype 18 (strain CDC 3083-94 / BS512).